The sequence spans 237 residues: DCN1-like protein 5 (237 aa).

A phosphoserine mark is found at Ser9, Ser41, and Ser48. A DCUN1 domain is found at 46 to 232; it reads FSSKKCLAWF…LLDEFVEWQK (187 aa).

As to quaternary structure, part of a complex that contains DCUN1D5, CUL1 and RBX1; this interaction is bridged by CUL1. Interacts (via the DCUN1 domain) with the unneddylated cullins: interacts with CUL1, CUL2, CUL3, CUL4A, CUL4B and CUL5; these interactions promote the cullin neddylation and the identity of the cullin dictates the affinity of the interaction. Interacts (via DCUN1 domain) with UBE2M (N-terminally acetylated form) and probably with UBE2F (N-terminally acetylated form). May also interact with regulators or subunits of cullin-RING ligases such as RBX1, RNF7, ELOB and DDB1; these interactions are bridged by cullins. Interacts with CAND1; this interaction is bridged by cullins and strongly inhibits the neddylation of cullins. These CAND-cullin-DCNL complexes can only be neddylated in the presence of a substrate adapter. Post-translationally, phosphorylation at Ser-41 is independent of cullin's interaction. Phosphorylated in response to both TICAM1 and MYD88 dependent Toll-like receptor (TLR) pathway activation. Phosphorylated in response to IL1B stimulation. As to expression, weakly expressed in testis, skin and immune tissues (thymus, spleen and lymph nodes).

It is found in the nucleus. The protein resides in the cytoplasm. It localises to the cytoskeleton. Its subcellular location is the spindle. Functionally, contributes to the neddylation of all cullins by transferring NEDD8 from N-terminally acetylated NEDD8-conjugating E2s enzyme to different cullin C-terminal domain-RBX complexes which is necessary for the activation of cullin-RING E3 ubiquitin ligases (CRLs). May play a role in DNA damage response and may participate in cell proliferation and anchorage-independent cell growth. The sequence is that of DCN1-like protein 5 from Homo sapiens (Human).